Here is a 461-residue protein sequence, read N- to C-terminus: Steroidogenic factor 1 (461 aa).

The nuclear receptor DNA-binding region spans 10 to 85 (DELCPVCGDK…VGMRLEAVRA (76 aa)). An NR C4-type zinc finger spans residues 13 to 33 (CPVCGDKVSGYHYGLLTCESC). Residues Lys34, Lys38, and Lys72 each carry the N6-acetyllysine modification. The segment at 49–73 (CTESQSCKIDKTLRKRCPFCRFQKC) adopts an NR C4-type zinc-finger fold. Lys119 participates in a covalent cross-link: Glycyl lysine isopeptide (Lys-Gly) (interchain with G-Cter in SUMO). Residues 119–153 (KLETGPPMGVPPPPPPPPDYMLPPGLHVPEPKGLA) form a disordered region. The segment covering 126-139 (MGVPPPPPPPPDYM) has biased composition (pro residues). A Glycyl lysine isopeptide (Lys-Gly) (interchain with G-Cter in SUMO) cross-link involves residue Lys194. Ser203 carries the post-translational modification Phosphoserine; by CDK7. The NR LBD domain maps to 222–459 (GVPELILQLL…NLLIEMLQAK (238 aa)). Gly341, Tyr436, and Lys440 together coordinate a 1,2-diacyl-sn-glycero-3-phosphocholine.

This sequence belongs to the nuclear hormone receptor family. NR5 subfamily. Binds DNA as a monomer. Part of a complex consisting of SFPQ, NONO and NR5A1. Interacts with NR0B2. Interacts with DGKQ and CDK7. Binds to and activated by HIPK3. In terms of processing, acetylation stimulates the transcriptional activity. Sumoylation reduces CDK7-mediated phosphorylation on Ser-203. Post-translationally, phosphorylated on Ser-203 by CDK7. This phosphorylation promotes transcriptional activity.

Its subcellular location is the nucleus. Transcriptional activator. Seems to be essential for sexual differentiation and formation of the primary steroidogenic tissues. Binds to the Ad4 site found in the promoter region of steroidogenic P450 genes such as CYP11A, CYP11B and CYP21B. Also regulates the AMH/Muellerian inhibiting substance gene as well as the AHCH and STAR genes. 5'-YCAAGGYC-3' and 5'-RRAGGTCA-3' are the consensus sequences for the recognition by NR5A1. The SFPQ-NONO-NR5A1 complex binds to the CYP17 promoter and regulates basal and cAMP-dependent transcriptional activity. Binds phospholipids with a phosphatidylinositol (PI) headgroup, in particular PI(3,4)P2 and PI(3,4,5)P3. Activated by the phosphorylation of NR5A1 by HIPK3 leading to increased steroidogenic gene expression upon cAMP signaling pathway stimulation. This chain is Steroidogenic factor 1 (NR5A1), found in Equus caballus (Horse).